The following is a 397-amino-acid chain: Succinate--CoA ligase [ADP-forming] subunit beta (397 aa).

Residues 9-254 (KALLKGYGAP…ETEEDAKEIE (246 aa)) form the ATP-grasp domain. ATP contacts are provided by residues lysine 46, 53–55 (GRG), glutamate 109, alanine 112, and glutamate 117. Mg(2+)-binding residues include asparagine 209 and aspartate 223. Substrate-binding positions include asparagine 274 and 331–333 (GIM).

It belongs to the succinate/malate CoA ligase beta subunit family. As to quaternary structure, heterotetramer of two alpha and two beta subunits. It depends on Mg(2+) as a cofactor.

It catalyses the reaction succinate + ATP + CoA = succinyl-CoA + ADP + phosphate. The enzyme catalyses GTP + succinate + CoA = succinyl-CoA + GDP + phosphate. It participates in carbohydrate metabolism; tricarboxylic acid cycle; succinate from succinyl-CoA (ligase route): step 1/1. Functionally, succinyl-CoA synthetase functions in the citric acid cycle (TCA), coupling the hydrolysis of succinyl-CoA to the synthesis of either ATP or GTP and thus represents the only step of substrate-level phosphorylation in the TCA. The beta subunit provides nucleotide specificity of the enzyme and binds the substrate succinate, while the binding sites for coenzyme A and phosphate are found in the alpha subunit. The protein is Succinate--CoA ligase [ADP-forming] subunit beta of Rhizobium johnstonii (strain DSM 114642 / LMG 32736 / 3841) (Rhizobium leguminosarum bv. viciae).